Here is a 324-residue protein sequence, read N- to C-terminus: Homeobox protein engrailed-2 (324 aa).

Disordered regions lie at residues 1–59 (MEEK…HQHP), 89–174 (GGAR…VLKA), and 215–240 (DRPS…RPRT). Over residues 89-110 (GGARGGEGGAGTTEGGGGGAGG) the composition is skewed to gly residues. A DNA-binding region (homeobox) is located at residues 235–294 (DKRPRTAFTAEQLQRLKAEFQTNRYLTEQRRQSLAQELSLNESQIKIWFQNKRAKIKKAT).

The protein belongs to the engrailed homeobox family. Cerebellar granule cells.

The protein resides in the nucleus. In Mus musculus (Mouse), this protein is Homeobox protein engrailed-2 (En2).